Reading from the N-terminus, the 98-residue chain is uncharacterized protein (98 aa).

A disordered region spans residues A58–H98.

This is an uncharacterized protein from Saccharomyces cerevisiae (strain ATCC 204508 / S288c) (Baker's yeast).